We begin with the raw amino-acid sequence, 297 residues long: Small ribosomal subunit protein uS2 (297 aa).

Over residues 263–289 (AAPTSWEADGGDWAASSAAPAGESWAE) the composition is skewed to low complexity. The interval 263 to 297 (AAPTSWEADGGDWAASSAAPAGESWAETQPAEAKW) is disordered.

It belongs to the universal ribosomal protein uS2 family. Component of the small ribosomal subunit. Mature ribosomes consist of a small (40S) and a large (60S) subunit. The 40S subunit contains about 33 different proteins and 1 molecule of RNA (18S). The 60S subunit contains about 49 different proteins and 3 molecules of RNA (25S, 5.8S and 5S). Interacts with rps21.

The protein resides in the cytoplasm. Functionally, required for the assembly and/or stability of the 40S ribosomal subunit. Required for the processing of the 20S rRNA-precursor to mature 18S rRNA in a late step of the maturation of 40S ribosomal subunits. The sequence is that of Small ribosomal subunit protein uS2 (rps0) from Neosartorya fischeri (strain ATCC 1020 / DSM 3700 / CBS 544.65 / FGSC A1164 / JCM 1740 / NRRL 181 / WB 181) (Aspergillus fischerianus).